A 514-amino-acid chain; its full sequence is MTHPVPDTGPASENMAPHRLRARPLGLFLPQQQPAVVMRTDCYICRSEGLAARSQVLIQAGGREILASLLHSSGEMIAPGEIGLSESAAAALGVAPGDAVSVRHAPPIDSFGALRGRVYGNRLDGAAFRSIVDDIVAGRYSDVHLSAFVTACSAFPLDHAETVALTGAMVASGERLAWGSDVVVDKHSVGGLPGNRTTPIVVAIVAALGLIMPKTSSRAITSPAGTADTMETLAPVNLDVGAIRRVVDHEGGCIVWGGAVSLSPADDIIIGVERVLDLDAAGQLVASVLSKKLAAGATHLVVDMPIGPTAKVRSPADAAALSGALQKVAAEFGLILKVMQGDGREPIGRGIGPALEARDILAVLEGRDPPPDLARRACELAGALIELAGRASPGTGAALAAQVLADGSAWSKFQRICEAQGGMRTPPLSNHRHVMTAQRPGRVSAIDNRRLAKLAKLAGAPAAKSAGLEMHVRLGSAVETGTPLLTVHAESQGELAYALAYAEAVGPILELSDR.

The protein belongs to the thymidine/pyrimidine-nucleoside phosphorylase family. Type 2 subfamily.

The enzyme catalyses thymidine + phosphate = 2-deoxy-alpha-D-ribose 1-phosphate + thymine. The protein is Putative thymidine phosphorylase of Sphingopyxis alaskensis (strain DSM 13593 / LMG 18877 / RB2256) (Sphingomonas alaskensis).